The sequence spans 103 residues: MKRALTSVVLAPRNAAIAVISLYRRVVSPIYGDVCRYYPSCSAYGLEAVQEHGLVHGGVLAAWRVCRCHPWAEGGIDDVPARRVQQYRRTRLGFVVAPSHGKG.

This sequence belongs to the UPF0161 family.

The protein localises to the cell membrane. Functionally, could be involved in insertion of integral membrane proteins into the membrane. In Clavibacter michiganensis subsp. michiganensis (strain NCPPB 382), this protein is Putative membrane protein insertion efficiency factor.